We begin with the raw amino-acid sequence, 247 residues long: Caffeoyl-CoA O-methyltransferase (247 aa).

A substrate-binding site is contributed by Lys-21. Residues Thr-63, Glu-85, 87 to 88 (GV), Ser-93, Asp-111, and Ala-140 contribute to the S-adenosyl-L-methionine site. Residue Asp-163 coordinates substrate. Asp-163 contributes to the a divalent metal cation binding site. Asp-165 serves as a coordination point for S-adenosyl-L-methionine. The a divalent metal cation site is built by Asp-189 and Asn-190. Asn-194 contacts substrate.

This sequence belongs to the class I-like SAM-binding methyltransferase superfamily. Cation-dependent O-methyltransferase family. CCoAMT subfamily. In terms of assembly, homodimer. Requires Ca(2+) as cofactor. The cofactor is Mg(2+). Zn(2+) is required as a cofactor.

The enzyme catalyses (E)-caffeoyl-CoA + S-adenosyl-L-methionine = (E)-feruloyl-CoA + S-adenosyl-L-homocysteine + H(+). It participates in aromatic compound metabolism; phenylpropanoid biosynthesis. In terms of biological role, methylates caffeoyl-CoA to feruloyl-CoA and 5-hydroxyferuloyl-CoA to sinapoyl-CoA. Plays a role in the synthesis of feruloylated polysaccharides. Involved in the reinforcement of the plant cell wall. Also involved in the responding to wounding or pathogen challenge by the increased formation of cell wall-bound ferulic acid polymers. This chain is Caffeoyl-CoA O-methyltransferase (CCOMT), found in Medicago sativa (Alfalfa).